A 618-amino-acid chain; its full sequence is Dihydroxy-acid dehydratase (618 aa).

D81 serves as a coordination point for Mg(2+). C122 is a [2Fe-2S] cluster binding site. 2 residues coordinate Mg(2+): D123 and K124. Position 124 is an N6-carboxylysine (K124). C195 contributes to the [2Fe-2S] cluster binding site. E490 contributes to the Mg(2+) binding site. The active-site Proton acceptor is the S516.

This sequence belongs to the IlvD/Edd family. Homodimer. It depends on [2Fe-2S] cluster as a cofactor. Mg(2+) serves as cofactor.

It catalyses the reaction (2R)-2,3-dihydroxy-3-methylbutanoate = 3-methyl-2-oxobutanoate + H2O. It carries out the reaction (2R,3R)-2,3-dihydroxy-3-methylpentanoate = (S)-3-methyl-2-oxopentanoate + H2O. Its pathway is amino-acid biosynthesis; L-isoleucine biosynthesis; L-isoleucine from 2-oxobutanoate: step 3/4. The protein operates within amino-acid biosynthesis; L-valine biosynthesis; L-valine from pyruvate: step 3/4. Functions in the biosynthesis of branched-chain amino acids. Catalyzes the dehydration of (2R,3R)-2,3-dihydroxy-3-methylpentanoate (2,3-dihydroxy-3-methylvalerate) into 2-oxo-3-methylpentanoate (2-oxo-3-methylvalerate) and of (2R)-2,3-dihydroxy-3-methylbutanoate (2,3-dihydroxyisovalerate) into 2-oxo-3-methylbutanoate (2-oxoisovalerate), the penultimate precursor to L-isoleucine and L-valine, respectively. The sequence is that of Dihydroxy-acid dehydratase from Gluconobacter oxydans (strain 621H) (Gluconobacter suboxydans).